The chain runs to 596 residues: Serine/arginine (SR)-type shuttling mRNA binding protein (596 aa).

Positions 1–11 (MSEVEYNQENT) are enriched in polar residues. Disordered stretches follow at residues 1 to 83 (MSEV…SRKS) and 244 to 279 (DRED…FGPP). 2 stretches are compositionally biased toward basic and acidic residues: residues 12 to 23 (HYAEVDNFDRDA) and 42 to 66 (SDRR…RSFN). In terms of domain architecture, RRM 1 spans 182–246 (FHRQPSIVYT…RQVFVREDRE (65 aa)). The segment covering 259-275 (PRGGGRGGLGGSSGRGS) has biased composition (gly residues). Residues 302 to 379 (TQLFIGNLPF…RMLEVRLDKF (78 aa)) enclose the RRM 2 domain. The segment at 458-478 (GYSTRASGPTSARAPAPPAAP) is disordered. An RRM 3 domain is found at 480–556 (QQIFVKNLPW…RPLDIEFNRR (77 aa)). Gly residues predominate over residues 563–572 (GGGSVNGGND). Residues 563-596 (GGGSVNGGNDGNAPMVEVSAQDDEDGDAPVPMQG) are disordered.

It localises to the nucleus. In terms of biological role, binds to intron-containing transcripts and is involved in quality control for the export of spliced mRNAs from the nucleus. Binds to pre-mRNAs until splicing is completed or until faulty mRNAs are degraded. The polypeptide is Serine/arginine (SR)-type shuttling mRNA binding protein (Mycosarcoma maydis (Corn smut fungus)).